The chain runs to 389 residues: Lipid-A-disaccharide synthase (389 aa).

The protein belongs to the LpxB family.

It carries out the reaction a lipid X + a UDP-2-N,3-O-bis[(3R)-3-hydroxyacyl]-alpha-D-glucosamine = a lipid A disaccharide + UDP + H(+). Its pathway is bacterial outer membrane biogenesis; LPS lipid A biosynthesis. Functionally, condensation of UDP-2,3-diacylglucosamine and 2,3-diacylglucosamine-1-phosphate to form lipid A disaccharide, a precursor of lipid A, a phosphorylated glycolipid that anchors the lipopolysaccharide to the outer membrane of the cell. This Burkholderia cenocepacia (strain HI2424) protein is Lipid-A-disaccharide synthase.